Consider the following 59-residue polypeptide: Cecropin-C type 2 (59 aa).

An N-terminal signal peptide occupies residues 1-23 (MNFAKVFVLVAMAVLLLVGQSEA).

The protein belongs to the cecropin family.

Its subcellular location is the secreted. Cecropins have lytic and antibacterial activity against several Gram-positive and Gram-negative bacteria. The polypeptide is Cecropin-C type 2 (CECC2) (Aedes albopictus (Asian tiger mosquito)).